Reading from the N-terminus, the 155-residue chain is Nucleosome assembly protein 1-like 5 (155 aa).

Over residues 1–16 the composition is skewed to basic and acidic residues; sequence MADPEKQGPAESRAED. Positions 1 to 60 are disordered; it reads MADPEKQGPAESRAEDEVMEGAQGGEDAATGDSATAPAAEEPQAPAENAPKPKNDFIESL. A compositionally biased stretch (low complexity) spans 27–49; that stretch reads DAATGDSATAPAAEEPQAPAENA. Residues 68–94 are a coiled coil; it reads VLALKKLQKRCDKIEAKFDKEFQALEK. The interval 119 to 155 is disordered; the sequence is WTLEGEDDEDDEEEEDEEEEEEEAAAGATGGPDSAEK. Acidic residues predominate over residues 122-142; that stretch reads EGEDDEDDEEEEDEEEEEEEA.

It belongs to the nucleosome assembly protein (NAP) family.

It localises to the nucleus. The protein is Nucleosome assembly protein 1-like 5 (Nap1l5) of Rattus norvegicus (Rat).